The primary structure comprises 137 residues: Ribosome-binding factor A (137 aa).

Belongs to the RbfA family. In terms of assembly, monomer. Binds 30S ribosomal subunits, but not 50S ribosomal subunits or 70S ribosomes.

Its subcellular location is the cytoplasm. Its function is as follows. One of several proteins that assist in the late maturation steps of the functional core of the 30S ribosomal subunit. Associates with free 30S ribosomal subunits (but not with 30S subunits that are part of 70S ribosomes or polysomes). Required for efficient processing of 16S rRNA. May interact with the 5'-terminal helix region of 16S rRNA. The sequence is that of Ribosome-binding factor A from Cereibacter sphaeroides (strain ATCC 17029 / ATH 2.4.9) (Rhodobacter sphaeroides).